Reading from the N-terminus, the 160-residue chain is Small ribosomal subunit protein uS7 (160 aa).

It belongs to the universal ribosomal protein uS7 family. As to quaternary structure, part of the 30S ribosomal subunit. Contacts proteins S9 and S11.

Functionally, one of the primary rRNA binding proteins, it binds directly to 16S rRNA where it nucleates assembly of the head domain of the 30S subunit. Is located at the subunit interface close to the decoding center, probably blocks exit of the E-site tRNA. The polypeptide is Small ribosomal subunit protein uS7 (Rickettsia typhi (strain ATCC VR-144 / Wilmington)).